A 256-amino-acid polypeptide reads, in one-letter code: MPVVSLAELLESGVHFGHQTRRWNPRMAPYIYTSRNGVHIIDLVQTAQLVEQAYTYMKEASENGKHVLFVGTKRQAAGIIAQEAKRCGAFYINQRWLGGMLTNWETIKTRVERLKELEALEESGNLARRPKKEASMLRRELDKLQKYLGGIKNMRKIPDIVVIIDQRREHNAIQECQKLGIPIVSLLDTNCDPQTVDLPIPANDDAIRSIKLIVGKLADAIYAGRHGQPVDDNGDYGDFDEAIDEYADETDASESE.

Positions 229–256 (PVDDNGDYGDFDEAIDEYADETDASESE) are disordered. Over residues 232–256 (DNGDYGDFDEAIDEYADETDASESE) the composition is skewed to acidic residues.

The protein belongs to the universal ribosomal protein uS2 family.

The polypeptide is Small ribosomal subunit protein uS2 (Picosynechococcus sp. (strain ATCC 27264 / PCC 7002 / PR-6) (Agmenellum quadruplicatum)).